A 798-amino-acid polypeptide reads, in one-letter code: Integrin beta-5 (798 aa).

A signal peptide spans 1–23 (MPRVPATLYACLLGLCALVPRLA). Residues 24–719 (GLNICTSGSA…REPECGSAPN (696 aa)) lie on the Extracellular side of the membrane. The 50-residue stretch at 27-76 (ICTSGSATSCEECLLIHPKCAWCSKEYFGNPRSITSRCDLKANLIRNGCE) folds into the PSI domain. Disulfide bonds link Cys-28–Cys-46, Cys-36–Cys-463, Cys-39–Cys-64, Cys-49–Cys-75, Cys-202–Cys-211, Cys-259–Cys-300, Cys-401–Cys-413, Cys-433–Cys-461, Cys-465–Cys-484, Cys-476–Cys-487, Cys-489–Cys-498, Cys-500–Cys-530, Cys-513–Cys-528, Cys-522–Cys-533, Cys-535–Cys-548, Cys-550–Cys-571, Cys-555–Cys-569, Cys-563–Cys-574, and Cys-576–Cys-585. The VWFA domain maps to 136–378 (YPVDLYYLMD…QLIINAYSSI (243 aa)). Mg(2+) is bound by residues Ser-147 and Ser-149. The Ca(2+) site is built by Ser-149, Asp-152, Asp-153, and Asp-184. Asn-242, Asp-244, Pro-246, and Glu-247 together coordinate Ca(2+). Glu-247 serves as a coordination point for Mg(2+). The N-linked (GlcNAc...) asparagine glycan is linked to Asn-347. Gly-362 contributes to the Ca(2+) binding site. Residues Asn-460 and Asn-479 are each glycosylated (N-linked (GlcNAc...) asparagine). 4 I-EGF domains span residues 465-499 (CSTGLEPNSARCSGNGTYTCGLCECDPGYLGTRCE), 500-549 (CQEG…PFCE), 550-586 (CDSFSCARNKGVLCSGHGECHCGECKCHAGYIGDNCN), and 587-626 (CSTDVSTCKAKDGQICSDRGRCVCGQCQCTEPGAFGETCE). Asn-505 carries N-linked (GlcNAc...) asparagine glycosylation. Residue Asn-586 is glycosylated (N-linked (GlcNAc...) asparagine). Intrachain disulfides connect Cys-587/Cys-610, Cys-594/Cys-608, Cys-602/Cys-613, Cys-615/Cys-625, Cys-628/Cys-631, Cys-635/Cys-682, Cys-641/Cys-661, Cys-644/Cys-657, and Cys-690/Cys-714. Asn-654 and Asn-705 each carry an N-linked (GlcNAc...) asparagine glycan. A helical membrane pass occupies residues 720-742 (AMTILLAVVGSILLIGMALLAIW). Residues 743–798 (KLLVTIHDRREFAKFQSERSRARYEMASNPLYRKPISTHTVDFAFNKFNKSYNGSV) lie on the Cytoplasmic side of the membrane. Residue Ser-770 is modified to Phosphoserine.

It belongs to the integrin beta chain family. As to quaternary structure, heterodimer of an alpha and a beta subunit. Beta-5 (ITGB5) associates with alpha-V (ITGAV). Interacts with MYO10. Interacts with DAB2. Integrin ITGAV:ITGB5 interacts with FBLN5 (via N-terminus). ITGAV:ITGB5 interacts with CCN3. Interacts with tensin TNS3; TNS3 also interacts with PEAK1, thus acting as an adapter molecule to bridge the association of PEAK1 with ITGB5.

It is found in the cell membrane. Functionally, integrin alpha-V/beta-5 (ITGAV:ITGB5) is a receptor for fibronectin. It recognizes the sequence R-G-D in its ligand. This chain is Integrin beta-5 (Itgb5), found in Mus musculus (Mouse).